A 315-amino-acid polypeptide reads, in one-letter code: Methionyl-tRNA formyltransferase (315 aa).

110-113 (SLLP) is a (6S)-5,6,7,8-tetrahydrofolate binding site.

It belongs to the Fmt family.

The catalysed reaction is L-methionyl-tRNA(fMet) + (6R)-10-formyltetrahydrofolate = N-formyl-L-methionyl-tRNA(fMet) + (6S)-5,6,7,8-tetrahydrofolate + H(+). In terms of biological role, attaches a formyl group to the free amino group of methionyl-tRNA(fMet). The formyl group appears to play a dual role in the initiator identity of N-formylmethionyl-tRNA by promoting its recognition by IF2 and preventing the misappropriation of this tRNA by the elongation apparatus. The protein is Methionyl-tRNA formyltransferase of Mycolicibacterium paratuberculosis (strain ATCC BAA-968 / K-10) (Mycobacterium paratuberculosis).